The chain runs to 310 residues: Porphobilinogen deaminase (310 aa).

Cysteine 242 is modified (S-(dipyrrolylmethanemethyl)cysteine).

The protein belongs to the HMBS family. As to quaternary structure, monomer. It depends on dipyrromethane as a cofactor.

It catalyses the reaction 4 porphobilinogen + H2O = hydroxymethylbilane + 4 NH4(+). It functions in the pathway porphyrin-containing compound metabolism; protoporphyrin-IX biosynthesis; coproporphyrinogen-III from 5-aminolevulinate: step 2/4. Its function is as follows. Tetrapolymerization of the monopyrrole PBG into the hydroxymethylbilane pre-uroporphyrinogen in several discrete steps. This Shewanella halifaxensis (strain HAW-EB4) protein is Porphobilinogen deaminase.